Here is a 298-residue protein sequence, read N- to C-terminus: 4-diphosphocytidyl-2-C-methyl-D-erythritol kinase (298 aa).

Lysine 19 is an active-site residue. 106-116 (PVASGIGGGSA) provides a ligand contact to ATP. The active site involves aspartate 148.

Belongs to the GHMP kinase family. IspE subfamily.

The catalysed reaction is 4-CDP-2-C-methyl-D-erythritol + ATP = 4-CDP-2-C-methyl-D-erythritol 2-phosphate + ADP + H(+). The protein operates within isoprenoid biosynthesis; isopentenyl diphosphate biosynthesis via DXP pathway; isopentenyl diphosphate from 1-deoxy-D-xylulose 5-phosphate: step 3/6. Catalyzes the phosphorylation of the position 2 hydroxy group of 4-diphosphocytidyl-2C-methyl-D-erythritol. This Rhizobium leguminosarum bv. trifolii (strain WSM2304) protein is 4-diphosphocytidyl-2-C-methyl-D-erythritol kinase.